Here is a 61-residue protein sequence, read N- to C-terminus: Large ribosomal subunit protein bL32 (61 aa).

Residues 1-19 show a composition bias toward basic residues; sequence MAHPKRRQSKTRTAKRRTH. Residues 1 to 20 are disordered; the sequence is MAHPKRRQSKTRTAKRRTHD.

This sequence belongs to the bacterial ribosomal protein bL32 family.

The polypeptide is Large ribosomal subunit protein bL32 (Bacteroides fragilis (strain YCH46)).